The primary structure comprises 155 residues: MAPGTKKKSDMAKFTFYKDRLMTFKNFEYDRDPDAKCTSQAVAQAGFYCTGPQSGKCAFCNKELDFDPEDDPWYEHTKRDEPCEFVRIGKLDDSELTINDTVRLSQTAMIMTKLFEHEMMINNLSNHSSSDALFDQLKKVPNTASTTKSNSRRGK.

Residues 20 to 87 form a BIR repeat; sequence RLMTFKNFEY…KRDEPCEFVR (68 aa). Residues Cys-57, Cys-60, His-76, and Cys-83 each coordinate Zn(2+).

It belongs to the IAP family. Component of the CPC complex which consists of icp-1; csc-1; bir-1 and air-2. Within the complex, interacts with csc-1, icp-1 and air-2. Interacts with csc-1 in a zinc-dependent-manner; the interaction is direct. Expressed in oocytes and sperm.

It is found in the chromosome. Its subcellular location is the cytoplasm. It localises to the cytoskeleton. The protein localises to the spindle. The protein resides in the midbody. Component of the chromosomal passenger complex (CPC), a complex that acts as a key regulator of chromosome segregation and cytokinesis. The CPC complex has essential functions at the centromere in ensuring correct chromosome condensation, alignment and segregation. In the complex, required to direct the Aurora B/air-2 kinase to chromosomes. Also functions in spindle midzone formation and in the formation of polar bodies during oogenesis. Required for the localization of the kinetochore component hcp-1 to chromosomes. Involved in the positive regulation of transcription. Involved in the transcriptional regulation of collagen genes. The protein is Chromosomal passenger complex protein bir-1 of Caenorhabditis elegans.